The sequence spans 162 residues: SsrA-binding protein (162 aa).

Basic and acidic residues predominate over residues 137–154; the sequence is HDKREDTKAREWDREKAR. A disordered region spans residues 137-162; it reads HDKREDTKAREWDREKARIMKNKHRG.

Belongs to the SmpB family.

The protein localises to the cytoplasm. Required for rescue of stalled ribosomes mediated by trans-translation. Binds to transfer-messenger RNA (tmRNA), required for stable association of tmRNA with ribosomes. tmRNA and SmpB together mimic tRNA shape, replacing the anticodon stem-loop with SmpB. tmRNA is encoded by the ssrA gene; the 2 termini fold to resemble tRNA(Ala) and it encodes a 'tag peptide', a short internal open reading frame. During trans-translation Ala-aminoacylated tmRNA acts like a tRNA, entering the A-site of stalled ribosomes, displacing the stalled mRNA. The ribosome then switches to translate the ORF on the tmRNA; the nascent peptide is terminated with the 'tag peptide' encoded by the tmRNA and targeted for degradation. The ribosome is freed to recommence translation, which seems to be the essential function of trans-translation. This Aeromonas hydrophila subsp. hydrophila (strain ATCC 7966 / DSM 30187 / BCRC 13018 / CCUG 14551 / JCM 1027 / KCTC 2358 / NCIMB 9240 / NCTC 8049) protein is SsrA-binding protein.